A 306-amino-acid polypeptide reads, in one-letter code: Ribonuclease Z (306 aa).

Residues H63, H65, D67, H68, H141, D208, and H266 each coordinate Zn(2+). Catalysis depends on D67, which acts as the Proton acceptor.

The protein belongs to the RNase Z family. Homodimer. It depends on Zn(2+) as a cofactor.

The enzyme catalyses Endonucleolytic cleavage of RNA, removing extra 3' nucleotides from tRNA precursor, generating 3' termini of tRNAs. A 3'-hydroxy group is left at the tRNA terminus and a 5'-phosphoryl group is left at the trailer molecule.. In terms of biological role, zinc phosphodiesterase, which displays some tRNA 3'-processing endonuclease activity. Probably involved in tRNA maturation, by removing a 3'-trailer from precursor tRNA. The protein is Ribonuclease Z of Chlamydia caviae (strain ATCC VR-813 / DSM 19441 / 03DC25 / GPIC) (Chlamydophila caviae).